The chain runs to 353 residues: Photosystem II D2 protein (353 aa).

N-acetylthreonine is present on Thr2. Thr2 bears the Phosphothreonine mark. A helical transmembrane segment spans residues 41 to 61; sequence CAYFALGGWFTGTTFVTSWYT. His118 is a binding site for chlorophyll a. The helical transmembrane segment at 125-141 threads the bilayer; that stretch reads GFMLRQFELARSVQLRP. Pheophytin a is bound by residues Gln130 and Asn143. Residues 153-166 form a helical membrane-spanning segment; that stretch reads VFVSVFLIYPLGQS. His198 contributes to the chlorophyll a binding site. A helical transmembrane segment spans residues 208-228; the sequence is AALLCAIHGATVENTLFEDGD. Residues His215 and Phe262 each contribute to the a plastoquinone site. His215 serves as a coordination point for Fe cation. Residue His269 participates in Fe cation binding. The helical transmembrane segment at 279–295 threads the bilayer; that stretch reads GLWMSAIGVVGLALNLR.

This sequence belongs to the reaction center PufL/M/PsbA/D family. PSII is composed of 1 copy each of membrane proteins PsbA, PsbB, PsbC, PsbD, PsbE, PsbF, PsbH, PsbI, PsbJ, PsbK, PsbL, PsbM, PsbT, PsbX, PsbY, PsbZ, Psb30/Ycf12, at least 3 peripheral proteins of the oxygen-evolving complex and a large number of cofactors. It forms dimeric complexes. It depends on The D1/D2 heterodimer binds P680, chlorophylls that are the primary electron donor of PSII, and subsequent electron acceptors. It shares a non-heme iron and each subunit binds pheophytin, quinone, additional chlorophylls, carotenoids and lipids. There is also a Cl(-1) ion associated with D1 and D2, which is required for oxygen evolution. The PSII complex binds additional chlorophylls, carotenoids and specific lipids. as a cofactor.

It is found in the plastid. The protein resides in the chloroplast thylakoid membrane. The catalysed reaction is 2 a plastoquinone + 4 hnu + 2 H2O = 2 a plastoquinol + O2. In terms of biological role, photosystem II (PSII) is a light-driven water:plastoquinone oxidoreductase that uses light energy to abstract electrons from H(2)O, generating O(2) and a proton gradient subsequently used for ATP formation. It consists of a core antenna complex that captures photons, and an electron transfer chain that converts photonic excitation into a charge separation. The D1/D2 (PsbA/PsbD) reaction center heterodimer binds P680, the primary electron donor of PSII as well as several subsequent electron acceptors. D2 is needed for assembly of a stable PSII complex. The polypeptide is Photosystem II D2 protein (Pinus thunbergii (Japanese black pine)).